The primary structure comprises 321 residues: Methionyl-tRNA formyltransferase (321 aa).

112-115 (SILP) is a binding site for (6S)-5,6,7,8-tetrahydrofolate.

The protein belongs to the Fmt family.

It carries out the reaction L-methionyl-tRNA(fMet) + (6R)-10-formyltetrahydrofolate = N-formyl-L-methionyl-tRNA(fMet) + (6S)-5,6,7,8-tetrahydrofolate + H(+). Its function is as follows. Attaches a formyl group to the free amino group of methionyl-tRNA(fMet). The formyl group appears to play a dual role in the initiator identity of N-formylmethionyl-tRNA by promoting its recognition by IF2 and preventing the misappropriation of this tRNA by the elongation apparatus. This Shewanella pealeana (strain ATCC 700345 / ANG-SQ1) protein is Methionyl-tRNA formyltransferase.